Reading from the N-terminus, the 266-residue chain is MARSPRIRIKDNDKAEYARLVKNTKAKIARTKKKYGVDLSAEINIPDLESFETRAQFNKWKEQASSFTNRANMRYQFEKNAYGVVASKAKIAEIERNTKEVQRLVDEKINAMKDKEYYAGGKPQGTIEQRIAMTSPAHVTGINRPRDFDFSKVRTYSRLRTLEESMEMRTDPQYYEKKMIQLQLNFIKSVEGSFNSFDAADELIEELKKIPPDDFYELFLRISEISFEEFDSEGNTVENVEGNVYKILSYLEQYRRGDFDLSLKGF.

The disordered stretch occupies residues 1–73; the sequence is MARSPRIRIK…ASSFTNRANM (73 aa). Residues 74 to 172 are intermediate; makes extensive contacts with the phage DNA polymerase; the sequence is RYQFEKNAYG…EESMEMRTDP (99 aa). The interval 173-266 is priming; the sequence is QYYEKKMIQL…GDFDLSLKGF (94 aa). Ser-232 is subject to O-(5'-phospho-DNA)-serine. Residues 256-258 are interaction with the viral DNA polymerase; sequence RGD.

It belongs to the phi29likevirus DNA terminal protein family. As to quaternary structure, interacts with the viral polymerase; this interaction allows the initiation of TP-primed DNA replication at both viral DNA ends. Binds to ssDNA. Interacts with the replication protein p1. Part of a DNA-gp3-gp16 complex.

It is found in the virion. In terms of biological role, acts as a primer for DNA elongation during viral genomic replication. Acts as the small terminase protein during packaging. Recruits the phage DNA polymerase to the bacterial nucleoid. Primer terminal protein (TP) is covalently linked to the 5'-ends of both strands of the genome through a phosphodiester bond between the beta-hydroxyl group of a serine residue and the 5'-phosphate of the terminal deoxyadenylate (dAMP). To start replication, the DNA polymerase forms a heterodimer with a free TP that recognizes the replication origins at both 5' ends of the linear chromosome, and initiates replication using as primer the OH-group of Ser-232 of the TP. Since the polymerase initiates the replication on the second thymine, the TP-dAMP initiation product slides backwards to recover the template information of the first nucleotide. Functionally, hydrolyzes host peptidoglycans during virus entry. The protein is DNA terminal protein (3) of Bacillus subtilis (Bacteriophage PZA).